Here is a 656-residue protein sequence, read N- to C-terminus: Protein arginine N-methyltransferase 7 (656 aa).

2 consecutive SAM-dependent MTase PRMT-type domains span residues 12–338 (EREW…FSIW) and 343–656 (GKDS…QSGN).

It belongs to the class I-like SAM-binding methyltransferase superfamily. Protein arginine N-methyltransferase family. PRMT7 subfamily.

Arginine methyltransferase that can both catalyze the formation of omega-N monomethylarginine (MMA) and symmetrical dimethylarginine (sDMA). In Caenorhabditis briggsae, this protein is Protein arginine N-methyltransferase 7 (prmt-7).